The primary structure comprises 163 residues: Putative 4-hydroxy-4-methyl-2-oxoglutarate aldolase (163 aa).

Substrate-binding positions include 75–78 and R97; that span reads GDQL. An a divalent metal cation-binding site is contributed by D98.

It belongs to the class II aldolase/RraA-like family. As to quaternary structure, homotrimer. It depends on a divalent metal cation as a cofactor.

The catalysed reaction is 4-hydroxy-4-methyl-2-oxoglutarate = 2 pyruvate. The enzyme catalyses oxaloacetate + H(+) = pyruvate + CO2. Its function is as follows. Catalyzes the aldol cleavage of 4-hydroxy-4-methyl-2-oxoglutarate (HMG) into 2 molecules of pyruvate. Also contains a secondary oxaloacetate (OAA) decarboxylase activity due to the common pyruvate enolate transition state formed following C-C bond cleavage in the retro-aldol and decarboxylation reactions. This is Putative 4-hydroxy-4-methyl-2-oxoglutarate aldolase from Photobacterium profundum (strain SS9).